Here is a 112-residue protein sequence, read N- to C-terminus: Large ribosomal subunit protein eL22 (112 aa).

It belongs to the eukaryotic ribosomal protein eL22 family. In terms of assembly, component of the large ribosomal subunit.

The protein localises to the cytoplasm. This is Large ribosomal subunit protein eL22 (RPL22) from Encephalitozoon cuniculi (strain GB-M1) (Microsporidian parasite).